A 295-amino-acid polypeptide reads, in one-letter code: Pyridoxal 5'-phosphate synthase subunit PdxS (295 aa).

D-ribose 5-phosphate is bound at residue D25. The active-site Schiff-base intermediate with D-ribose 5-phosphate is the K82. Position 154 (G154) interacts with D-ribose 5-phosphate. Residue R166 coordinates D-glyceraldehyde 3-phosphate. D-ribose 5-phosphate contacts are provided by residues G215 and 236–237; that span reads GS.

The protein belongs to the PdxS/SNZ family. In terms of assembly, in the presence of PdxT, forms a dodecamer of heterodimers.

It carries out the reaction aldehydo-D-ribose 5-phosphate + D-glyceraldehyde 3-phosphate + L-glutamine = pyridoxal 5'-phosphate + L-glutamate + phosphate + 3 H2O + H(+). Its pathway is cofactor biosynthesis; pyridoxal 5'-phosphate biosynthesis. Functionally, catalyzes the formation of pyridoxal 5'-phosphate from ribose 5-phosphate (RBP), glyceraldehyde 3-phosphate (G3P) and ammonia. The ammonia is provided by the PdxT subunit. Can also use ribulose 5-phosphate and dihydroxyacetone phosphate as substrates, resulting from enzyme-catalyzed isomerization of RBP and G3P, respectively. This is Pyridoxal 5'-phosphate synthase subunit PdxS from Listeria welshimeri serovar 6b (strain ATCC 35897 / DSM 20650 / CCUG 15529 / CIP 8149 / NCTC 11857 / SLCC 5334 / V8).